Reading from the N-terminus, the 666-residue chain is ATP-dependent zinc metalloprotease FtsH (666 aa).

The interval 1-23 (MSREVTSGLPQDKPTGSAPPPPP) is disordered. At 1-27 (MSREVTSGLPQDKPTGSAPPPPPPWRR) the chain is on the cytoplasmic side. A helical membrane pass occupies residues 28–48 (WLLPIGLLVSLVLLFTFPMRP). The Extracellular portion of the chain corresponds to 49 to 125 (SSGKTLTYSE…RPPGPSLASQ (77 aa)). A helical membrane pass occupies residues 126–146 (VLAGVLSFLPFLLLLGLFAYS). Topologically, residues 147 to 666 (GRRAGAGFLA…RTAASSDDLL (520 aa)) are cytoplasmic. Position 219 to 226 (219 to 226 (GPPGTGKT)) interacts with ATP. Histidine 442 lines the Zn(2+) pocket. Glutamate 443 is an active-site residue. The Zn(2+) site is built by histidine 446 and aspartate 518. A disordered region spans residues 626–666 (PEEHREAAARHVRRPGIAAATGASMAGGSEPRTAASSDDLL). Positions 641-653 (GIAAATGASMAGG) are enriched in low complexity.

The protein in the central section; belongs to the AAA ATPase family. It in the C-terminal section; belongs to the peptidase M41 family. As to quaternary structure, homohexamer. Zn(2+) is required as a cofactor.

It is found in the cell membrane. Its function is as follows. Acts as a processive, ATP-dependent zinc metallopeptidase for both cytoplasmic and membrane proteins. Plays a role in the quality control of integral membrane proteins. The protein is ATP-dependent zinc metalloprotease FtsH of Acidothermus cellulolyticus (strain ATCC 43068 / DSM 8971 / 11B).